We begin with the raw amino-acid sequence, 312 residues long: Methionyl-tRNA formyltransferase (312 aa).

117 to 120 (SLLP) provides a ligand contact to (6S)-5,6,7,8-tetrahydrofolate.

It belongs to the Fmt family.

The catalysed reaction is L-methionyl-tRNA(fMet) + (6R)-10-formyltetrahydrofolate = N-formyl-L-methionyl-tRNA(fMet) + (6S)-5,6,7,8-tetrahydrofolate + H(+). In terms of biological role, attaches a formyl group to the free amino group of methionyl-tRNA(fMet). The formyl group appears to play a dual role in the initiator identity of N-formylmethionyl-tRNA by promoting its recognition by IF2 and preventing the misappropriation of this tRNA by the elongation apparatus. This Bordetella bronchiseptica (strain ATCC BAA-588 / NCTC 13252 / RB50) (Alcaligenes bronchisepticus) protein is Methionyl-tRNA formyltransferase.